A 458-amino-acid polypeptide reads, in one-letter code: UDP-N-acetylmuramoylalanine--D-glutamate ligase (458 aa).

An ATP-binding site is contributed by 124-130 (GSDGKTT).

Belongs to the MurCDEF family.

It is found in the cytoplasm. It catalyses the reaction UDP-N-acetyl-alpha-D-muramoyl-L-alanine + D-glutamate + ATP = UDP-N-acetyl-alpha-D-muramoyl-L-alanyl-D-glutamate + ADP + phosphate + H(+). It participates in cell wall biogenesis; peptidoglycan biosynthesis. Its function is as follows. Cell wall formation. Catalyzes the addition of glutamate to the nucleotide precursor UDP-N-acetylmuramoyl-L-alanine (UMA). This Clostridium kluyveri (strain NBRC 12016) protein is UDP-N-acetylmuramoylalanine--D-glutamate ligase.